A 304-amino-acid chain; its full sequence is Aspartate carbamoyltransferase catalytic subunit (304 aa).

Carbamoyl phosphate-binding residues include Arg-49 and Thr-50. An L-aspartate-binding site is contributed by Lys-77. Arg-99, His-127, and Gln-130 together coordinate carbamoyl phosphate. Positions 160 and 211 each coordinate L-aspartate. Carbamoyl phosphate contacts are provided by Ala-252 and Pro-253.

Belongs to the aspartate/ornithine carbamoyltransferase superfamily. ATCase family. Heterododecamer (2C3:3R2) of six catalytic PyrB chains organized as two trimers (C3), and six regulatory PyrI chains organized as three dimers (R2).

It carries out the reaction carbamoyl phosphate + L-aspartate = N-carbamoyl-L-aspartate + phosphate + H(+). The protein operates within pyrimidine metabolism; UMP biosynthesis via de novo pathway; (S)-dihydroorotate from bicarbonate: step 2/3. In terms of biological role, catalyzes the condensation of carbamoyl phosphate and aspartate to form carbamoyl aspartate and inorganic phosphate, the committed step in the de novo pyrimidine nucleotide biosynthesis pathway. The chain is Aspartate carbamoyltransferase catalytic subunit from Bacillus mycoides (strain KBAB4) (Bacillus weihenstephanensis).